Reading from the N-terminus, the 288-residue chain is Bifunctional protein MdtA (288 aa).

NADP(+)-binding positions include 129-132, 152-156, 195-198, and Lys256; these read TGPV, RKLDK, and TAGA.

As to quaternary structure, homotrimer.

The protein resides in the cytoplasm. It carries out the reaction 5,10-methylenetetrahydromethanopterin + NADP(+) = 5,10-methenyl-5,6,7,8-tetrahydromethanopterin + NADPH. It catalyses the reaction (6R)-5,10-methylene-5,6,7,8-tetrahydrofolate + NADP(+) = (6R)-5,10-methenyltetrahydrofolate + NADPH. It functions in the pathway one-carbon metabolism; formaldehyde degradation; formate from formaldehyde (H(4)MPT route): step 2/5. In terms of biological role, catalyzes the dehydrogenation of methylene-H(4)MPT. Can also catalyze the reversible dehydrogenation of methylene-H(4)F with 20-fold lower catalytic efficiency. The protein is Bifunctional protein MdtA of Methylorubrum extorquens (strain ATCC 14718 / DSM 1338 / JCM 2805 / NCIMB 9133 / AM1) (Methylobacterium extorquens).